Consider the following 473-residue polypeptide: Dolichyl-diphosphooligosaccharide--protein glycosyltransferase subunit 1B (473 aa).

Positions 1–27 (MAPSLSTAVSSLLLLLLLAAAISVSSS) are cleaved as a signal peptide. Residues 28–439 (PPMPEDSIRV…PFQVYYEFNP (412 aa)) are Lumenal-facing. 2 N-linked (GlcNAc...) asparagine glycosylation sites follow: N307 and N361. The chain crosses the membrane as a helical span at residues 440-460 (IFMLAEPLMLISAVFLFFVAC). Residues 461–473 (IAYLHMDLSIGKS) lie on the Cytoplasmic side of the membrane.

Belongs to the OST1 family. As to quaternary structure, component of the oligosaccharyltransferase (OST) complex.

The protein resides in the endoplasmic reticulum membrane. Its pathway is protein modification; protein glycosylation. Its function is as follows. Subunit of the oligosaccharyl transferase (OST) complex that catalyzes the initial transfer of a defined glycan (Glc(3)Man(9)GlcNAc(2) in eukaryotes) from the lipid carrier dolichol-pyrophosphate to an asparagine residue within an Asn-X-Ser/Thr consensus motif in nascent polypeptide chains, the first step in protein N-glycosylation. N-glycosylation occurs cotranslationally and the complex associates with the Sec61 complex at the channel-forming translocon complex that mediates protein translocation across the endoplasmic reticulum (ER). All subunits are required for a maximal enzyme activity. This is Dolichyl-diphosphooligosaccharide--protein glycosyltransferase subunit 1B (OST1B) from Oryza sativa subsp. japonica (Rice).